Reading from the N-terminus, the 364-residue chain is 3-isopropylmalate dehydrogenase (364 aa).

NAD(+) is bound at residue 76–89; that stretch reads GPKWEKLPPNEQPE. Residues Arg97, Arg107, Arg136, and Asp225 each contribute to the substrate site. Positions 225, 249, and 253 each coordinate Mg(2+). Residue 283–295 coordinates NAD(+); the sequence is GSAPDIAGKGIAN.

The protein belongs to the isocitrate and isopropylmalate dehydrogenases family. LeuB type 1 subfamily. Homodimer. The cofactor is Mg(2+). Requires Mn(2+) as cofactor.

Its subcellular location is the cytoplasm. It catalyses the reaction (2R,3S)-3-isopropylmalate + NAD(+) = 4-methyl-2-oxopentanoate + CO2 + NADH. Its pathway is amino-acid biosynthesis; L-leucine biosynthesis; L-leucine from 3-methyl-2-oxobutanoate: step 3/4. Functionally, catalyzes the oxidation of 3-carboxy-2-hydroxy-4-methylpentanoate (3-isopropylmalate) to 3-carboxy-4-methyl-2-oxopentanoate. The product decarboxylates to 4-methyl-2 oxopentanoate. In Shewanella oneidensis (strain ATCC 700550 / JCM 31522 / CIP 106686 / LMG 19005 / NCIMB 14063 / MR-1), this protein is 3-isopropylmalate dehydrogenase.